A 257-amino-acid chain; its full sequence is UPF0246 protein ACICU_02469 (257 aa).

Belongs to the UPF0246 family.

This is UPF0246 protein ACICU_02469 from Acinetobacter baumannii (strain ACICU).